Reading from the N-terminus, the 168-residue chain is SPbeta prophage-derived uncharacterized protein YonX (168 aa).

The stretch at 1–53 forms a coiled coil; it reads MNAQLFNLESRLDELENEINTQYCELDTNLDALKSNRIELESQLEKFESSLTN.

This chain is SPbeta prophage-derived uncharacterized protein YonX (yonX), found in Bacillus subtilis (strain 168).